The chain runs to 139 residues: Transcription antitermination protein NusB (139 aa).

This sequence belongs to the NusB family.

In terms of biological role, involved in transcription antitermination. Required for transcription of ribosomal RNA (rRNA) genes. Binds specifically to the boxA antiterminator sequence of the ribosomal RNA (rrn) operons. In Cronobacter sakazakii (strain ATCC BAA-894) (Enterobacter sakazakii), this protein is Transcription antitermination protein NusB.